The sequence spans 416 residues: Enterobactin exporter EntS (416 aa).

Residues 1–21 (MNKQSWLLNLSLLKTHPAFRA) lie on the Cytoplasmic side of the membrane. Residues 22-42 (VFLARFISIVSLGLLGVAVPV) traverse the membrane as a helical segment. Topologically, residues 43–55 (QIQMMTHSTWQVG) are periplasmic. Residues 56–76 (LSVTLTGGAMFVGLMVGGVLA) form a helical membrane-spanning segment. Residues 77–83 (DRYERKK) are Cytoplasmic-facing. Residues 84–104 (VILLARGTCGIGFIGLCLNAL) form a helical membrane-spanning segment. Residues 105 to 109 (LPEPS) are Periplasmic-facing. A helical membrane pass occupies residues 110–130 (LLAIYLLGLWDGFFASLGVTA). Over 131-156 (LLAATPALVGRENLMQAGAITMLTVR) the chain is Cytoplasmic. Residues 157-177 (LGSVISPMIGGLLLATGGVAW) form a helical membrane-spanning segment. Asparagine 178 is a topological domain (periplasmic). A helical transmembrane segment spans residues 179 to 199 (YGLAAAGTFITLLPLLSLPAL). Residues 200 to 218 (PPPPQPREHPLKSLLAGFR) are Cytoplasmic-facing. The chain crosses the membrane as a helical span at residues 219 to 239 (FLLASPLVGGIALLGGLLTMA). Over 240–256 (SAVRVLYPALADNWQMS) the chain is Periplasmic. A helical transmembrane segment spans residues 257–277 (AAQIGFLYAAIPLGAAIGALT). Residues 278–287 (SGKLAHSARP) lie on the Cytoplasmic side of the membrane. A helical membrane pass occupies residues 288-307 (GLLMLLSTLGSFLAIGLFGL). Topologically, residues 308–313 (MPMWIL) are periplasmic. A helical membrane pass occupies residues 314–336 (GVVCLALFGWLSAVSSLLQYTML). Over 337–356 (QTQTPEAMLGRINGLWTAQN) the chain is Cytoplasmic. A helical transmembrane segment spans residues 357–377 (VTGDAIGAALLGGLGAMMTPV). Alanine 378 is a topological domain (periplasmic). Residues 379–399 (SASASGFGLLIIGVLLLLVLV) form a helical membrane-spanning segment. The Cytoplasmic segment spans residues 400 to 416 (ELRRFRQTPPQVTASDS).

The protein belongs to the major facilitator superfamily. EntS (TC 2.A.1.38) family.

The protein localises to the cell inner membrane. Component of an export pathway for enterobactin. This Escherichia coli (strain 55989 / EAEC) protein is Enterobactin exporter EntS.